We begin with the raw amino-acid sequence, 262 residues long: Succinate dehydrogenase [ubiquinone] iron-sulfur subunit (262 aa).

The 90-residue stretch at 21-110 folds into the 2Fe-2S ferredoxin-type domain; that stretch reads KLIKIFRWDS…NNIIYVYPLP (90 aa). Residues Cys73, Cys78, Cys81, and Cys93 each contribute to the [2Fe-2S] cluster site. The 4Fe-4S ferredoxin-type domain maps to 154-184; that stretch reads DRLYLDGLYECILCACCSASCPSYWWNHDKY. [4Fe-4S] cluster is bound by residues Cys164, Cys167, and Cys170. Cys174 is a binding site for [3Fe-4S] cluster. Trp179 contacts a ubiquinone. 2 residues coordinate [3Fe-4S] cluster: Cys221 and Cys227. A [4Fe-4S] cluster-binding site is contributed by Cys231.

Belongs to the succinate dehydrogenase/fumarate reductase iron-sulfur protein family. In terms of assembly, component of complex II composed of four subunits: a flavoprotein (FP), an iron-sulfur protein (IP), and a cytochrome b composed of a large and a small subunit. It depends on [2Fe-2S] cluster as a cofactor. Requires [3Fe-4S] cluster as cofactor. The cofactor is [4Fe-4S] cluster.

The protein localises to the mitochondrion inner membrane. It catalyses the reaction a quinone + succinate = fumarate + a quinol. It participates in carbohydrate metabolism; tricarboxylic acid cycle; fumarate from succinate (eukaryal route): step 1/1. In terms of biological role, iron-sulfur protein (IP) subunit of succinate dehydrogenase (SDH) that is involved in complex II of the mitochondrial electron transport chain and is responsible for transferring electrons from succinate to ubiquinone (coenzyme Q). The protein is Succinate dehydrogenase [ubiquinone] iron-sulfur subunit (SDH2) of Cyanidium caldarium (Red alga).